Consider the following 374-residue polypeptide: Tomoregulin-2 (374 aa).

An N-terminal signal peptide occupies residues 1–40; sequence MVLWESPRQCSSWTLCEGFCWLLLLPVMLLIVARPVKLAA. The Extracellular segment spans residues 41 to 320; it reads FPTSLSDCQT…VPGPVRFQYV (280 aa). Kazal-like domains are found at residues 90 to 137 and 181 to 229; these read VCQF…SCAT and VCNI…RCQD. 6 cysteine pairs are disulfide-bonded: cysteine 91–cysteine 121, cysteine 95–cysteine 114, cysteine 103–cysteine 135, cysteine 182–cysteine 213, cysteine 186–cysteine 206, and cysteine 195–cysteine 227. Residue asparagine 204 is glycosylated (N-linked (GlcNAc...) (complex) asparagine; atypical). The N-linked (GlcNAc...) asparagine glycan is linked to asparagine 230. An EGF-like domain is found at 261-301; that stretch reads HHIPCPEHYNGFCMHGKCEHSINMQEPSCRCDAGYTGQHCE. 3 disulfide bridges follow: cysteine 265-cysteine 278, cysteine 273-cysteine 289, and cysteine 291-cysteine 300. A required for shedding region spans residues 303–320; it reads KDYSVLYVVPGPVRFQYV. The chain crosses the membrane as a helical span at residues 321–341; the sequence is LIAAVIGTIQIAVICVVVLCI. The Cytoplasmic segment spans residues 342 to 374; the sequence is TRKCPRSNRIHRQKQNTGHYSSDNTTRASTRLI. The segment at 353–374 is disordered; that stretch reads RQKQNTGHYSSDNTTRASTRLI. Residues 356–374 are compositionally biased toward polar residues; that stretch reads QNTGHYSSDNTTRASTRLI.

This sequence belongs to the tomoregulin family. In terms of processing, O-glycosylated; contains chondroitin sulfate glycosaminoglycans. A soluble form (TMEFF2-ECD) is produced by proteolytic shedding. This shedding can be induced by phorbol ester or pro-inflammatory cytokines such as TNFalpha, and is mediated by ADAM17. As to expression, highly expressed in adult and fetal brain, spinal cord and prostate. Expressed in all brain regions except the pituitary gland, with highest levels in amygdala and corpus callosum. Expressed in the pericryptal myofibroblasts and other stromal cells of normal colonic mucosa. Expressed in prostate carcinoma. Down-regulated in colorectal cancer. Present in Alzheimer disease plaques (at protein level). Isoform 3 is expressed weakly in testis and at high levels in normal and cancerous prostate.

It localises to the membrane. The protein resides in the secreted. Its function is as follows. May be a survival factor for hippocampal and mesencephalic neurons. The shedded form up-regulates cancer cell proliferation, probably by promoting ERK1/2 phosphorylation. In Homo sapiens (Human), this protein is Tomoregulin-2 (TMEFF2).